A 251-amino-acid polypeptide reads, in one-letter code: Large ribosomal subunit protein uL16m (251 aa).

A mitochondrion-targeting transit peptide spans 1 to 29; sequence MWRLLTRVPAPLLRMHFSDSWAALPTSAG.

It belongs to the universal ribosomal protein uL16 family. In terms of assembly, component of the mitochondrial ribosome large subunit (39S) which comprises a 16S rRNA and about 50 distinct proteins.

It is found in the mitochondrion. This is Large ribosomal subunit protein uL16m (Mrpl16) from Mus musculus (Mouse).